A 252-amino-acid chain; its full sequence is Imidazole glycerol phosphate synthase subunit HisF (252 aa).

Active-site residues include Asp-11 and Asp-130.

It belongs to the HisA/HisF family. Heterodimer of HisH and HisF.

Its subcellular location is the cytoplasm. The enzyme catalyses 5-[(5-phospho-1-deoxy-D-ribulos-1-ylimino)methylamino]-1-(5-phospho-beta-D-ribosyl)imidazole-4-carboxamide + L-glutamine = D-erythro-1-(imidazol-4-yl)glycerol 3-phosphate + 5-amino-1-(5-phospho-beta-D-ribosyl)imidazole-4-carboxamide + L-glutamate + H(+). It functions in the pathway amino-acid biosynthesis; L-histidine biosynthesis; L-histidine from 5-phospho-alpha-D-ribose 1-diphosphate: step 5/9. Its function is as follows. IGPS catalyzes the conversion of PRFAR and glutamine to IGP, AICAR and glutamate. The HisF subunit catalyzes the cyclization activity that produces IGP and AICAR from PRFAR using the ammonia provided by the HisH subunit. The protein is Imidazole glycerol phosphate synthase subunit HisF of Petrotoga mobilis (strain DSM 10674 / SJ95).